We begin with the raw amino-acid sequence, 261 residues long: Vacuolar iron transporter (261 aa).

The chain crosses the membrane as a helical span at residues 66–86; that stretch reads GQVLIAALAALFAGALSMAVG. Fe cation-binding residues include Glu105, Glu108, Glu116, Glu119, and Glu154. The next 3 helical transmembrane spans lie at 170 to 190, 197 to 217, and 233 to 253; these read MVSF…GAWI, IGAI…VGAF, and GGAL…TLNI.

Belongs to the CCC1 family.

It localises to the vacuole membrane. It carries out the reaction Fe(2+)(in) = Fe(2+)(out). In terms of biological role, vacuolar iron transporter involved in the transfer of iron ions from the cytosol to the vacuole for intracellular iron storage. In Acanthamoeba castellanii (strain ATCC 30010 / Neff), this protein is Vacuolar iron transporter.